A 144-amino-acid polypeptide reads, in one-letter code: Large ribosomal subunit protein uL13 (144 aa).

This sequence belongs to the universal ribosomal protein uL13 family. As to quaternary structure, part of the 50S ribosomal subunit.

This protein is one of the early assembly proteins of the 50S ribosomal subunit, although it is not seen to bind rRNA by itself. It is important during the early stages of 50S assembly. This Nitratidesulfovibrio vulgaris (strain DSM 19637 / Miyazaki F) (Desulfovibrio vulgaris) protein is Large ribosomal subunit protein uL13.